Here is a 171-residue protein sequence, read N- to C-terminus: Ribosome maturation factor RimM (171 aa).

The region spanning 96 to 169 (EGEFFIADMI…KMIIDPIKGM (74 aa)) is the PRC barrel domain.

Belongs to the RimM family. In terms of assembly, binds ribosomal protein uS19.

It localises to the cytoplasm. Functionally, an accessory protein needed during the final step in the assembly of 30S ribosomal subunit, possibly for assembly of the head region. Essential for efficient processing of 16S rRNA. May be needed both before and after RbfA during the maturation of 16S rRNA. It has affinity for free ribosomal 30S subunits but not for 70S ribosomes. This Clostridioides difficile (strain 630) (Peptoclostridium difficile) protein is Ribosome maturation factor RimM.